We begin with the raw amino-acid sequence, 118 residues long: MTDLIPLEQAHCLPRKGSDHKLGEARLTELLPQVPGWELAEAGMALTRTFRFADYYRTLAFVNALAWIAHREDHHPDLGVHYDRVVVRYSTHDVGGLSENDFICAAKTAQLYDQGITA.

The protein belongs to the pterin-4-alpha-carbinolamine dehydratase family.

The catalysed reaction is (4aS,6R)-4a-hydroxy-L-erythro-5,6,7,8-tetrahydrobiopterin = (6R)-L-erythro-6,7-dihydrobiopterin + H2O. In Xanthomonas euvesicatoria pv. vesicatoria (strain 85-10) (Xanthomonas campestris pv. vesicatoria), this protein is Putative pterin-4-alpha-carbinolamine dehydratase.